The chain runs to 598 residues: Terpenoid synthase 1 (598 aa).

Residues Asp-362, Asp-366, Asn-494, and Asp-502 each contribute to the Mg(2+) site. The short motif at 362–366 is the DDXXD motif element; the sequence is DDTCD.

Belongs to the terpene synthase family. Tpsa subfamily. Mg(2+) serves as cofactor. Requires Mn(2+) as cofactor. Expressed exclusively in siliques.

The protein localises to the cytoplasm. The protein operates within secondary metabolite biosynthesis; terpenoid biosynthesis. This chain is Terpenoid synthase 1 (TPS01), found in Arabidopsis thaliana (Mouse-ear cress).